The sequence spans 428 residues: Putative zinc metalloprotease SAR1238 (428 aa).

His-21 is a Zn(2+) binding site. Glu-22 is an active-site residue. Zn(2+) is bound at residue His-25. The next 4 membrane-spanning stretches (helical) occupy residues 172 to 194 (FLTLFAGPLFNFILALVLFIGLA), 309 to 331 (GSTYIFSAVVGMLASIFTGGFSF), 352 to 374 (IISLIGYTALLSVNLGIMNLIPI), and 401 to 420 (TTIIAIGAIFMVVIMILVTW). Positions 186 to 269 (ALVLFIGLAY…TKSVELTPKK (84 aa)) constitute a PDZ domain.

The protein belongs to the peptidase M50B family. Zn(2+) is required as a cofactor.

The protein resides in the cell membrane. The sequence is that of Putative zinc metalloprotease SAR1238 from Staphylococcus aureus (strain MRSA252).